Consider the following 411-residue polypeptide: Dual-specificity RNA methyltransferase RlmN (411 aa).

The active-site Proton acceptor is the E125. A Radical SAM core domain is found at 131–380 (EEGRGTLCVS…IRTPRGRDIL (250 aa)). Residues C138 and C383 are joined by a disulfide bond. The [4Fe-4S] cluster site is built by C145, C149, and C152. Residues 209-210 (GE), S241, 263-265 (SLH), and N340 each bind S-adenosyl-L-methionine. Catalysis depends on C383, which acts as the S-methylcysteine intermediate.

It belongs to the radical SAM superfamily. RlmN family. The cofactor is [4Fe-4S] cluster.

It localises to the cytoplasm. It catalyses the reaction adenosine(2503) in 23S rRNA + 2 reduced [2Fe-2S]-[ferredoxin] + 2 S-adenosyl-L-methionine = 2-methyladenosine(2503) in 23S rRNA + 5'-deoxyadenosine + L-methionine + 2 oxidized [2Fe-2S]-[ferredoxin] + S-adenosyl-L-homocysteine. It carries out the reaction adenosine(37) in tRNA + 2 reduced [2Fe-2S]-[ferredoxin] + 2 S-adenosyl-L-methionine = 2-methyladenosine(37) in tRNA + 5'-deoxyadenosine + L-methionine + 2 oxidized [2Fe-2S]-[ferredoxin] + S-adenosyl-L-homocysteine. Functionally, specifically methylates position 2 of adenine 2503 in 23S rRNA and position 2 of adenine 37 in tRNAs. m2A2503 modification seems to play a crucial role in the proofreading step occurring at the peptidyl transferase center and thus would serve to optimize ribosomal fidelity. This chain is Dual-specificity RNA methyltransferase RlmN, found in Brucella anthropi (strain ATCC 49188 / DSM 6882 / CCUG 24695 / JCM 21032 / LMG 3331 / NBRC 15819 / NCTC 12168 / Alc 37) (Ochrobactrum anthropi).